Consider the following 304-residue polypeptide: Ribosomal RNA small subunit methyltransferase H (304 aa).

Residues 36-38 (GGH), aspartate 53, phenylalanine 79, aspartate 98, and glutamine 105 each bind S-adenosyl-L-methionine.

This sequence belongs to the methyltransferase superfamily. RsmH family.

It localises to the cytoplasm. It carries out the reaction cytidine(1402) in 16S rRNA + S-adenosyl-L-methionine = N(4)-methylcytidine(1402) in 16S rRNA + S-adenosyl-L-homocysteine + H(+). Its function is as follows. Specifically methylates the N4 position of cytidine in position 1402 (C1402) of 16S rRNA. The chain is Ribosomal RNA small subunit methyltransferase H from Myxococcus xanthus (strain DK1622).